Here is a 454-residue protein sequence, read N- to C-terminus: Lipase member H (454 aa).

Residues 1-23 form the signal peptide; it reads MIYRKIIWGILYVTLMLFDTHRA. N-linked (GlcNAc...) asparagine glycosylation is found at Asn73, Asn137, and Asn151. Ser161 acts as the Nucleophile in catalysis. Residue Asp185 is the Charge relay system of the active site. Cys240 and Cys253 are oxidised to a cystine. His255 (charge relay system) is an active-site residue. N-linked (GlcNAc...) asparagine glycosylation occurs at Asn267. 2 disulfide bridges follow: Cys277–Cys288 and Cys291–Cys299. Asn358 carries an N-linked (GlcNAc...) asparagine glycan. Cys430 and Cys449 are disulfide-bonded.

It belongs to the AB hydrolase superfamily. Lipase family.

It is found in the secreted. The protein resides in the cell membrane. The catalysed reaction is 1-hexadecanoyl-2-(9Z-octadecenoyl)-sn-glycero-3-phosphate + H2O = 2-(9Z-octadecenoyl)-sn-glycero-3-phosphate + hexadecanoate + H(+). Functionally, hydrolyzes specifically phosphatidic acid (PA) to produce 2-acyl lysophosphatidic acid (LPA; a potent bioactive lipid mediator) and fatty acid. Does not hydrolyze other phospholipids, like phosphatidylserine (PS), phosphatidylcholine (PC) and phosphatidylethanolamine (PE) or triacylglycerol (TG). The polypeptide is Lipase member H (liph) (Danio rerio (Zebrafish)).